A 457-amino-acid polypeptide reads, in one-letter code: Glutamate--tRNA ligase 1 (457 aa).

The 'HIGH' region motif lies at 9 to 19 (PSPTGYIHIGN). The short motif at 250 to 254 (GLSKR) is the 'KMSKS' region element. An ATP-binding site is contributed by lysine 253.

This sequence belongs to the class-I aminoacyl-tRNA synthetase family. Glutamate--tRNA ligase type 1 subfamily. As to quaternary structure, monomer.

It is found in the cytoplasm. The catalysed reaction is tRNA(Glu) + L-glutamate + ATP = L-glutamyl-tRNA(Glu) + AMP + diphosphate. Functionally, catalyzes the attachment of glutamate to tRNA(Glu) in a two-step reaction: glutamate is first activated by ATP to form Glu-AMP and then transferred to the acceptor end of tRNA(Glu). The sequence is that of Glutamate--tRNA ligase 1 from Brucella abortus (strain S19).